Reading from the N-terminus, the 351-residue chain is Mitogen-activated protein kinase 2 (351 aa).

A Protein kinase domain is found at 16-304 (YEILDVIGEG…AEEALQHNYL (289 aa)). Residues 22-30 (IGEGAYGIV) and K45 each bind ATP. The active-site Proton acceptor is the D140. Position 176 is a phosphothreonine (T176). Residues 176-178 (TEY) carry the TXY motif. Y178 carries the phosphotyrosine modification.

Belongs to the protein kinase superfamily. CMGC Ser/Thr protein kinase family. MAP kinase subfamily. The cofactor is Mg(2+). It depends on Mn(2+) as a cofactor. In terms of processing, dually phosphorylated on Thr-176 and Tyr-178, which activates the enzyme.

The protein resides in the nucleus. It carries out the reaction L-seryl-[protein] + ATP = O-phospho-L-seryl-[protein] + ADP + H(+). It catalyses the reaction L-threonyl-[protein] + ATP = O-phospho-L-threonyl-[protein] + ADP + H(+). Activated by tyrosine and threonine phosphorylation. Inhibited by the MEK inhibitor U0126 but not by the p38 inhibitor SB203580. Cobalt abolishes kinase activity, while calcium, copper and nickel have little effect on kinase activity. Functionally, serine-threonine protein kinase which may be involved in pheromone signaling. Functionally complements the MAPK pheromone signaling pathway in S.cerevisiae. The protein is Mitogen-activated protein kinase 2 of Pneumocystis carinii.